The primary structure comprises 72 residues: Translational regulator CsrA (72 aa).

It belongs to the CsrA/RsmA family. As to quaternary structure, homodimer; the beta-strands of each monomer intercalate to form a hydrophobic core, while the alpha-helices form wings that extend away from the core.

Its subcellular location is the cytoplasm. Functionally, a translational regulator that binds mRNA to regulate translation initiation and/or mRNA stability. Usually binds in the 5'-UTR at or near the Shine-Dalgarno sequence preventing ribosome-binding, thus repressing translation. Its main target seems to be the major flagellin gene, while its function is anatagonized by FliW. The protein is Translational regulator CsrA of Clostridium novyi (strain NT).